The chain runs to 574 residues: MAFAPSVAHKPVAAAVCPVMAATEALATEGGLEARGAIFTRSEVVDFILDLAGYTEDQPLHEKRLLEPSFGGGDFLLPIIQRLLSAWRAARPNGTEVDDLGDAIRAVELHHDTFRSTYAAVVALLKREGLSANAATALADRWLSQGDFLLAPLEGQFDFVVGNPPYVRPELIPAPLLAEYRSRYQTMYDRADIYIPFIERSLTALSAGGNLGFICADRWMKNRYGGPLRSLVAERFHLKVYVDMVDTPAFHSDVIAYPAITIISREGGGATRIAHRPSIDRATLTTLAGLLSAPTLPKDAGPVRELARVTNGAEPWLLESSDQMALIRRLEGAFPLLEEAGCKVGIGVATGADKAFIGDFESLDVEPDRKLPLVTTKDIMTGEVQWRGQGVINPFAESGGLVDLGEYPRLRRYLEARRDVIAGRHCAKKAPANWYRTIDRITPALAARPKLLIPDIKGESHIVFEGGELYPSHNLYYVTSDDWDLRALQAVLLSAVSRLFVATYSTKMRGGFLRFQAQYLRRIRIPRWADVPEPLRRELAEAAIKRDVQACNRAVFRLYGLSHEERSALGGNGE.

It belongs to the N(4)/N(6)-methyltransferase family. As to quaternary structure, monomer.

It carries out the reaction a 2'-deoxyadenosine in DNA + S-adenosyl-L-methionine = an N(6)-methyl-2'-deoxyadenosine in DNA + S-adenosyl-L-homocysteine + H(+). Its function is as follows. A gamma subtype methylase, recognizes the double-stranded sequence 5'-CTCGAG-3', methylates A-5 on both strands, and protects the DNA from cleavage by the PaeR7I endonuclease. The protein is Type II methyltransferase M.PaeR7I (paeR7IM) of Pseudomonas aeruginosa.